The chain runs to 354 residues: Guanine nucleotide-binding protein G(t) subunit alpha-2 (354 aa).

The segment at 1–27 (MGSGASAEDKELAKRSKELEKKLQEDA) is disordered. The N-myristoyl glycine moiety is linked to residue G2. A compositionally biased stretch (basic and acidic residues) spans 7–27 (AEDKELAKRSKELEKKLQEDA). The 323-residue stretch at 32 to 354 (KTVKLLLLGA…KENLKDCGLF (323 aa)) folds into the G-alpha domain. Positions 35–48 (KLLLLGAGESGKST) are G1 motif. Residues 40–47 (GAGESGKS), 175–181 (LRSRVKT), 200–204 (DVGGQ), 269–272 (NKKD), and A326 each bind GTP. Residue S47 coordinates Mg(2+). The G2 motif stretch occupies residues 173 to 181 (DVLRSRVKT). Position 178 is an ADP-ribosylarginine; by cholera toxin (R178). T181 contributes to the Mg(2+) binding site. The segment at 196 to 205 (FRMFDVGGQR) is G3 motif. The segment at 265–272 (VLFLNKKD) is G4 motif. A G5 motif region spans residues 324-329 (TCATDT). An ADP-ribosylcysteine; by pertussis toxin modification is found at C351.

The protein belongs to the G-alpha family. G(i/o/t/z) subfamily. In terms of assembly, g proteins are composed of 3 units; alpha, beta and gamma. The alpha chain contains the guanine nucleotide binding site. Retinal rod outer segment.

The protein localises to the cell projection. It is found in the cilium. The protein resides in the photoreceptor outer segment. Its subcellular location is the photoreceptor inner segment. Functionally, guanine nucleotide-binding proteins (G proteins) are involved as modulators or transducers in various transmembrane signaling systems. Transducin is an amplifier and one of the transducers of a visual impulse that performs the coupling between rhodopsin and cGMP-phosphodiesterase. The protein is Guanine nucleotide-binding protein G(t) subunit alpha-2 (GNAT2) of Homo sapiens (Human).